Consider the following 193-residue polypeptide: Pyridoxal 5'-phosphate synthase subunit PdxT (193 aa).

52–54 (GES) contacts L-glutamine. Cys84 (nucleophile) is an active-site residue. Residues Arg111 and 139–140 (IR) contribute to the L-glutamine site. Catalysis depends on charge relay system residues His176 and Glu178.

This sequence belongs to the glutaminase PdxT/SNO family. As to quaternary structure, in the presence of PdxS, forms a dodecamer of heterodimers. Only shows activity in the heterodimer.

It catalyses the reaction aldehydo-D-ribose 5-phosphate + D-glyceraldehyde 3-phosphate + L-glutamine = pyridoxal 5'-phosphate + L-glutamate + phosphate + 3 H2O + H(+). The enzyme catalyses L-glutamine + H2O = L-glutamate + NH4(+). It functions in the pathway cofactor biosynthesis; pyridoxal 5'-phosphate biosynthesis. In terms of biological role, catalyzes the hydrolysis of glutamine to glutamate and ammonia as part of the biosynthesis of pyridoxal 5'-phosphate. The resulting ammonia molecule is channeled to the active site of PdxS. The sequence is that of Pyridoxal 5'-phosphate synthase subunit PdxT from Pasteurella multocida (strain Pm70).